Consider the following 494-residue polypeptide: NADH-ubiquinone oxidoreductase chain 4 (494 aa).

14 helical membrane-spanning segments follow: residues 6-26, 41-61, 87-107, 118-138, 141-161, 172-192, 207-227, 246-266, 280-300, 302-322, 336-356, 375-395, 415-435, and 460-480; these read IMIY…LLIY, TIGL…FILF, IDGI…ISLV, VLSF…VFLV, ILLF…LIGL, FYLF…IITM, ANFS…SFAV, PLAG…YGIF, YTYI…FSTL, TIAI…VYLL, IALG…VGGI, LMPI…GSPL, VLGV…IFMF, and FILL…PAVI.

This sequence belongs to the complex I subunit 4 family.

It is found in the mitochondrion membrane. The catalysed reaction is a ubiquinone + NADH + 5 H(+)(in) = a ubiquinol + NAD(+) + 4 H(+)(out). Functionally, core subunit of the mitochondrial membrane respiratory chain NADH dehydrogenase (Complex I) that is believed to belong to the minimal assembly required for catalysis. Complex I functions in the transfer of electrons from NADH to the respiratory chain. The immediate electron acceptor for the enzyme is believed to be ubiquinone. This chain is NADH-ubiquinone oxidoreductase chain 4 (ND4), found in Trichophyton rubrum (Athlete's foot fungus).